We begin with the raw amino-acid sequence, 156 residues long: MSRRHSAEKREIIPDPKYGDVVLTKFMNSIMYEGKKSTAERIVYGAFDIVENRARANPIEVFRAALDNVAPMIEVRSRRVGGATYQVPVEVRTERRQALAIRWLIQAARSRNDRTMVERLSAELLDAANNRGNAVKKREDTHRMAEANRAFSHYRW.

The protein belongs to the universal ribosomal protein uS7 family. As to quaternary structure, part of the 30S ribosomal subunit. Contacts proteins S9 and S11.

One of the primary rRNA binding proteins, it binds directly to 16S rRNA where it nucleates assembly of the head domain of the 30S subunit. Is located at the subunit interface close to the decoding center, probably blocks exit of the E-site tRNA. This chain is Small ribosomal subunit protein uS7, found in Methylobacterium radiotolerans (strain ATCC 27329 / DSM 1819 / JCM 2831 / NBRC 15690 / NCIMB 10815 / 0-1).